Reading from the N-terminus, the 445-residue chain is Phosphoglucosamine mutase (445 aa).

S102 (phosphoserine intermediate) is an active-site residue. Positions 102, 241, 243, and 245 each coordinate Mg(2+). S102 bears the Phosphoserine mark.

This sequence belongs to the phosphohexose mutase family. It depends on Mg(2+) as a cofactor. Post-translationally, activated by phosphorylation.

It catalyses the reaction alpha-D-glucosamine 1-phosphate = D-glucosamine 6-phosphate. Its function is as follows. Catalyzes the conversion of glucosamine-6-phosphate to glucosamine-1-phosphate. The polypeptide is Phosphoglucosamine mutase (Enterobacter sp. (strain 638)).